We begin with the raw amino-acid sequence, 1225 residues long: DNA-directed RNA polymerase subunit beta' (1225 aa).

Residues Cys-60, Cys-62, Cys-75, and Cys-78 each coordinate Zn(2+). Mg(2+) contacts are provided by Asp-450, Asp-452, and Asp-454. The Zn(2+) site is built by Cys-818, Cys-892, Cys-899, and Cys-902.

This sequence belongs to the RNA polymerase beta' chain family. In terms of assembly, the RNAP catalytic core consists of 2 alpha, 1 beta, 1 beta' and 1 omega subunit. When a sigma factor is associated with the core the holoenzyme is formed, which can initiate transcription. Mg(2+) is required as a cofactor. It depends on Zn(2+) as a cofactor.

The catalysed reaction is RNA(n) + a ribonucleoside 5'-triphosphate = RNA(n+1) + diphosphate. Its function is as follows. DNA-dependent RNA polymerase catalyzes the transcription of DNA into RNA using the four ribonucleoside triphosphates as substrates. This chain is DNA-directed RNA polymerase subunit beta', found in Streptococcus pneumoniae (strain Hungary19A-6).